Reading from the N-terminus, the 42-residue chain is uncharacterized protein (42 aa).

The interval 1 to 42 is disordered; the sequence is MTTGKPQSFEKMRTPFPGRSKAKGPQSDIIPSAPPNTPVTEH. Residues 32-42 show a composition bias toward pro residues; the sequence is SAPPNTPVTEH.

This is an uncharacterized protein from Schizosaccharomyces pombe (strain 972 / ATCC 24843) (Fission yeast).